We begin with the raw amino-acid sequence, 228 residues long: Deoxyribose-phosphate aldolase (228 aa).

Catalysis depends on aspartate 96, which acts as the Proton donor/acceptor. Lysine 157 functions as the Schiff-base intermediate with acetaldehyde in the catalytic mechanism. Catalysis depends on lysine 185, which acts as the Proton donor/acceptor.

This sequence belongs to the DeoC/FbaB aldolase family. DeoC type 1 subfamily.

The protein localises to the cytoplasm. The catalysed reaction is 2-deoxy-D-ribose 5-phosphate = D-glyceraldehyde 3-phosphate + acetaldehyde. Its pathway is carbohydrate degradation; 2-deoxy-D-ribose 1-phosphate degradation; D-glyceraldehyde 3-phosphate and acetaldehyde from 2-deoxy-alpha-D-ribose 1-phosphate: step 2/2. Its function is as follows. Catalyzes a reversible aldol reaction between acetaldehyde and D-glyceraldehyde 3-phosphate to generate 2-deoxy-D-ribose 5-phosphate. This Cyanothece sp. (strain PCC 7425 / ATCC 29141) protein is Deoxyribose-phosphate aldolase.